The primary structure comprises 520 residues: Transactivator/viroplasmin protein (520 aa).

Disordered regions lie at residues 103–126 (SDFL…SVAP) and 487–520 (EDAS…KQVD).

It belongs to the caulimoviridae viroplasmin family.

The protein localises to the host cytoplasm. Enhances the ribosomal termination-reinitiation event leading to the translation of major open reading frames on the polycistronic viral RNAs. The protein is Transactivator/viroplasmin protein of Arabidopsis thaliana (Mouse-ear cress).